A 312-amino-acid polypeptide reads, in one-letter code: tRNA dimethylallyltransferase (312 aa).

ATP is bound at residue 15–22; sequence GPTAAGKS. Residue 17–22 coordinates substrate; sequence TAAGKS. The segment at 40–43 is interaction with substrate tRNA; that stretch reads DSMQ.

The protein belongs to the IPP transferase family. In terms of assembly, monomer. Requires Mg(2+) as cofactor.

The enzyme catalyses adenosine(37) in tRNA + dimethylallyl diphosphate = N(6)-dimethylallyladenosine(37) in tRNA + diphosphate. Its function is as follows. Catalyzes the transfer of a dimethylallyl group onto the adenine at position 37 in tRNAs that read codons beginning with uridine, leading to the formation of N6-(dimethylallyl)adenosine (i(6)A). In Streptomyces coelicolor (strain ATCC BAA-471 / A3(2) / M145), this protein is tRNA dimethylallyltransferase.